Consider the following 239-residue polypeptide: Pyridoxine 5'-phosphate synthase (239 aa).

Asparagine 7 serves as a coordination point for 3-amino-2-oxopropyl phosphate. A 1-deoxy-D-xylulose 5-phosphate-binding site is contributed by 9–10 (DH). Arginine 18 lines the 3-amino-2-oxopropyl phosphate pocket. Histidine 43 (proton acceptor) is an active-site residue. 2 residues coordinate 1-deoxy-D-xylulose 5-phosphate: arginine 45 and histidine 50. The Proton acceptor role is filled by glutamate 70. Threonine 100 is a binding site for 1-deoxy-D-xylulose 5-phosphate. The active-site Proton donor is the histidine 191. 3-amino-2-oxopropyl phosphate-binding positions include glycine 192 and 213–214 (GH).

This sequence belongs to the PNP synthase family. Homooctamer; tetramer of dimers.

Its subcellular location is the cytoplasm. It catalyses the reaction 3-amino-2-oxopropyl phosphate + 1-deoxy-D-xylulose 5-phosphate = pyridoxine 5'-phosphate + phosphate + 2 H2O + H(+). It participates in cofactor biosynthesis; pyridoxine 5'-phosphate biosynthesis; pyridoxine 5'-phosphate from D-erythrose 4-phosphate: step 5/5. Its function is as follows. Catalyzes the complicated ring closure reaction between the two acyclic compounds 1-deoxy-D-xylulose-5-phosphate (DXP) and 3-amino-2-oxopropyl phosphate (1-amino-acetone-3-phosphate or AAP) to form pyridoxine 5'-phosphate (PNP) and inorganic phosphate. The chain is Pyridoxine 5'-phosphate synthase from Trichlorobacter lovleyi (strain ATCC BAA-1151 / DSM 17278 / SZ) (Geobacter lovleyi).